We begin with the raw amino-acid sequence, 872 residues long: Paramyosin (872 aa).

A nonhelical region region spans residues methionine 1 to aspartate 31. Residues leucine 32–lysine 851 adopt a coiled-coil conformation. The tract at residues glutamate 294–leucine 376 is interaction with unc-89. The interval valine 856–phenylalanine 866 is nonhelical region.

Belongs to the paramyosin family. Homodimer. May interact with unc-89 (via SH3 domain). In terms of processing, phosphorylated on serine residues in the N-terminal non-helical region. In terms of tissue distribution, expressed in body wall muscles of larvae and adults (at protein level). Expressed in gonadal myoepithelial sheath cells (at protein level).

It localises to the cytoplasm. Its subcellular location is the myofibril. It is found in the sarcomere. The protein localises to the a band. In terms of biological role, structural component of the muscle thick filaments which is involved in assembly and organization of sarcomere myofilaments. Involved in ovulation. Plays a role in the formation of muscle connections, also called muscle arm extensions, between the body wall and the motor axons in the dorsal and ventral cord. The sequence is that of Paramyosin (unc-15) from Caenorhabditis elegans.